The chain runs to 638 residues: 1-deoxy-D-xylulose-5-phosphate synthase (638 aa).

Residues His79 and 120–122 contribute to the thiamine diphosphate site; that span reads GHS. Asp151 contacts Mg(2+). Thiamine diphosphate is bound by residues 152–153, Asn182, Tyr291, and Glu373; that span reads GA. Asn182 contacts Mg(2+).

The protein belongs to the transketolase family. DXPS subfamily. In terms of assembly, homodimer. The cofactor is Mg(2+). Thiamine diphosphate is required as a cofactor.

The catalysed reaction is D-glyceraldehyde 3-phosphate + pyruvate + H(+) = 1-deoxy-D-xylulose 5-phosphate + CO2. Its pathway is metabolic intermediate biosynthesis; 1-deoxy-D-xylulose 5-phosphate biosynthesis; 1-deoxy-D-xylulose 5-phosphate from D-glyceraldehyde 3-phosphate and pyruvate: step 1/1. Its function is as follows. Catalyzes the acyloin condensation reaction between C atoms 2 and 3 of pyruvate and glyceraldehyde 3-phosphate to yield 1-deoxy-D-xylulose-5-phosphate (DXP). The chain is 1-deoxy-D-xylulose-5-phosphate synthase from Xanthomonas oryzae pv. oryzae (strain MAFF 311018).